Reading from the N-terminus, the 430-residue chain is MSSVVVVGTQWGDEGKGKITDFLSENAEAIARYQGGNNAGHTIKFDGVTYKLHLIPSGIFYKEKISVIGNGMVVDPKALVEELKYLHDKGVDTSNLRISNRAHIILPYHIRIDEADEERKGANKIGTTKKGIGPAYMDKAARVGIRIIDLLDKETFKEKLEHNLGEKNRLLERFYELEGFKLEDILEEYYDYGQQFKEYVCDTSVVLNDALDDGKRVLFEGAQGVMLDIDQGTYPFVTSSNPIAGGVTIGSGVGPSKINHVVGVAKAYTTRVGDGPFPTELFDTIGDTIREVGHEYGTTTGRPRRVGWFDSVVVRHARRVSGLTDLSLTLLDVLTGIETLKICVAYKLDGKTITEFPASLKDLARCEPVYEELPGWTEDITGVTSLDDLPVNCRHYMERIAQLTGVQVSMFSVGPDRAQTHVIKSVWRLA.

GTP contacts are provided by residues 12-18 (GDEGKGK) and 40-42 (GHT). Residue D13 is the Proton acceptor of the active site. Residues D13 and G40 each contribute to the Mg(2+) site. IMP is bound by residues 13 to 16 (DEGK), 38 to 41 (NAGH), T128, R142, Q223, T238, and R302. H41 (proton donor) is an active-site residue. A substrate-binding site is contributed by 298–304 (TTTGRPR). GTP is bound by residues R304, 330 to 332 (LLD), and 412 to 414 (SVG).

Belongs to the adenylosuccinate synthetase family. As to quaternary structure, homodimer. The cofactor is Mg(2+).

The protein resides in the cytoplasm. The enzyme catalyses IMP + L-aspartate + GTP = N(6)-(1,2-dicarboxyethyl)-AMP + GDP + phosphate + 2 H(+). The protein operates within purine metabolism; AMP biosynthesis via de novo pathway; AMP from IMP: step 1/2. Functionally, plays an important role in the de novo pathway of purine nucleotide biosynthesis. Catalyzes the first committed step in the biosynthesis of AMP from IMP. This Listeria monocytogenes serotype 4b (strain CLIP80459) protein is Adenylosuccinate synthetase.